The chain runs to 543 residues: Early growth response protein 1 (543 aa).

3 disordered regions span residues 1 to 105 (MAAA…AESF), 165 to 213 (TNPP…PTPN), and 264 to 284 (LGLGTPDQKPFQGLESRTQQP). Residues 57–66 (GSGSNSSSSS) show a composition bias toward low complexity. A compositionally biased stretch (gly residues) spans 67–77 (SGGGGGGGGGS). A compositionally biased stretch (low complexity) spans 167–189 (PPASSSSAPSPAASSASASQSPP). Residue lysine 305 forms a Glycyl lysine isopeptide (Lys-Gly) (interchain with G-Cter in SUMO2) linkage. The disordered stretch occupies residues 318–339 (PSRMRKYPNRPSKTPPHERPYA). 3 C2H2-type zinc fingers span residues 338 to 362 (YACPVESCDRRFSRSDELTRHIRIH), 368 to 390 (FQCRICMRNFSRSDHLTTHIRTH), and 396 to 418 (FACDICGRKFARSDERKRHTKIH). The segment at 409–487 (DERKRHTKIH…GSSTYPSPVH (79 aa)) is disordered. The span at 413 to 423 (RHTKIHLRQKD) shows a compositional bias: basic residues. The span at 429 to 486 (SVVASSATSSLSSYPSPVATSYPSPVTTSYPSPATTSYPSPVPTSFSSPGSSTYPSPV) shows a compositional bias: low complexity.

Belongs to the EGR C2H2-type zinc-finger protein family. In terms of assembly, interacts with SNAI1 and SP1 upon 12-O-tetradecanoylphorbol-13-acetate (TPA) induction. As to expression, detected in neutrophils (at protein level).

The protein localises to the nucleus. Its subcellular location is the cytoplasm. Its function is as follows. Transcriptional regulator. Recognizes and binds to the DNA sequence 5'-GCG(T/G)GGGCG-3'(EGR-site) in the promoter region of target genes. Binds double-stranded target DNA, irrespective of the cytosine methylation status. Regulates the transcription of numerous target genes, and thereby plays an important role in regulating the response to growth factors, DNA damage, and ischemia. Plays a role in the regulation of cell survival, proliferation and cell death. Activates expression of p53/TP53 and TGFB1, and thereby helps prevent tumor formation. Required for normal progress through mitosis and normal proliferation of hepatocytes after partial hepatectomy. Mediates responses to ischemia and hypoxia; regulates the expression of proteins such as IL1B and CXCL2 that are involved in inflammatory processes and development of tissue damage after ischemia. Regulates biosynthesis of luteinizing hormone (LHB) in the pituitary. Regulates the amplitude of the expression rhythms of clock genes: BMAL1, PER2 and NR1D1 in the liver via the activation of PER1 (clock repressor) transcription. Regulates the rhythmic expression of core-clock gene BMAL1 in the suprachiasmatic nucleus (SCN). In Homo sapiens (Human), this protein is Early growth response protein 1 (EGR1).